A 428-amino-acid chain; its full sequence is GTPase Obg (428 aa).

An Obg domain is found at 1–158; the sequence is MFVDQVKIYV…RDVILELKVL (158 aa). One can recognise an OBG-type G domain in the interval 159–329; the sequence is ADVGLVGFPS…LLFEVANLIE (171 aa). GTP is bound by residues 165–172, 190–194, 212–215, 282–285, and 310–312; these read GFPSVGKS, FTTIV, DLPG, NKMD, and SAV. S172 and T192 together coordinate Mg(2+). One can recognise an OCT domain in the interval 350-428; sequence KFETEGVKFD…ILEYEFEFID (79 aa).

It belongs to the TRAFAC class OBG-HflX-like GTPase superfamily. OBG GTPase family. As to quaternary structure, monomer. Requires Mg(2+) as cofactor.

Its subcellular location is the cytoplasm. Functionally, an essential GTPase which binds GTP, GDP and possibly (p)ppGpp with moderate affinity, with high nucleotide exchange rates and a fairly low GTP hydrolysis rate. Plays a role in control of the cell cycle, stress response, ribosome biogenesis and in those bacteria that undergo differentiation, in morphogenesis control. The chain is GTPase Obg from Bacillus thuringiensis (strain Al Hakam).